We begin with the raw amino-acid sequence, 316 residues long: Ribosomal RNA large subunit methyltransferase F (316 aa).

Belongs to the methyltransferase superfamily. METTL16/RlmF family.

It localises to the cytoplasm. It carries out the reaction adenosine(1618) in 23S rRNA + S-adenosyl-L-methionine = N(6)-methyladenosine(1618) in 23S rRNA + S-adenosyl-L-homocysteine + H(+). Specifically methylates the adenine in position 1618 of 23S rRNA. The sequence is that of Ribosomal RNA large subunit methyltransferase F from Pseudomonas putida (strain W619).